The sequence spans 430 residues: Asparagine--tRNA ligase (430 aa).

It belongs to the class-II aminoacyl-tRNA synthetase family. In terms of assembly, homodimer.

Its subcellular location is the cytoplasm. It catalyses the reaction tRNA(Asn) + L-asparagine + ATP = L-asparaginyl-tRNA(Asn) + AMP + diphosphate + H(+). The chain is Asparagine--tRNA ligase from Listeria innocua serovar 6a (strain ATCC BAA-680 / CLIP 11262).